Here is a 164-residue protein sequence, read N- to C-terminus: Endoribonuclease YbeY (164 aa).

Residues His-120, His-124, and His-130 each contribute to the Zn(2+) site.

It belongs to the endoribonuclease YbeY family. The cofactor is Zn(2+).

It localises to the cytoplasm. Functionally, single strand-specific metallo-endoribonuclease involved in late-stage 70S ribosome quality control and in maturation of the 3' terminus of the 16S rRNA. In Acidothermus cellulolyticus (strain ATCC 43068 / DSM 8971 / 11B), this protein is Endoribonuclease YbeY.